We begin with the raw amino-acid sequence, 367 residues long: sn-glycerol-3-phosphate import ATP-binding protein UgpC (367 aa).

The 232-residue stretch at 4–235 folds into the ABC transporter domain; sequence LSLRNVQKTY…PASTFVAGFI (232 aa). An ATP-binding site is contributed by 37-44; the sequence is GPSGCGKS.

Belongs to the ABC transporter superfamily. sn-glycerol-3-phosphate importer (TC 3.A.1.1.3) family. As to quaternary structure, the complex is composed of two ATP-binding proteins (UgpC), two transmembrane proteins (UgpA and UgpE) and a solute-binding protein (UgpB).

The protein localises to the cell inner membrane. The enzyme catalyses sn-glycerol 3-phosphate(out) + ATP + H2O = sn-glycerol 3-phosphate(in) + ADP + phosphate + H(+). Part of the ABC transporter complex UgpBAEC involved in sn-glycerol-3-phosphate (G3P) import. Responsible for energy coupling to the transport system. The protein is sn-glycerol-3-phosphate import ATP-binding protein UgpC of Cupriavidus metallidurans (strain ATCC 43123 / DSM 2839 / NBRC 102507 / CH34) (Ralstonia metallidurans).